A 599-amino-acid polypeptide reads, in one-letter code: Membrane protein insertase YidC (599 aa).

Residues N6–M26 form a helical membrane-spanning segment. The segment at R35–R78 is disordered. Residues Q41 to A76 are compositionally biased toward low complexity. The next 4 helical transmembrane spans lie at F378–S398, W448–I468, V501–Q521, and I536–V556.

This sequence belongs to the OXA1/ALB3/YidC family. Type 1 subfamily. In terms of assembly, interacts with the Sec translocase complex via SecD. Specifically interacts with transmembrane segments of nascent integral membrane proteins during membrane integration.

Its subcellular location is the cell inner membrane. Required for the insertion and/or proper folding and/or complex formation of integral membrane proteins into the membrane. Involved in integration of membrane proteins that insert both dependently and independently of the Sec translocase complex, as well as at least some lipoproteins. Aids folding of multispanning membrane proteins. The protein is Membrane protein insertase YidC of Agrobacterium fabrum (strain C58 / ATCC 33970) (Agrobacterium tumefaciens (strain C58)).